The chain runs to 325 residues: Bifunctional ligase/repressor BirA (325 aa).

Positions 23-42 (GQKISDALGCSRTAVWKHIE) form a DNA-binding region, H-T-H motif. A BPL/LPL catalytic domain is found at 74 to 262 (RFGLKTEVMG…CFEKRYRDYM (189 aa)). Biotin-binding positions include glutamine 118, 122-124 (RGR), and lysine 189.

The protein belongs to the biotin--protein ligase family.

The enzyme catalyses biotin + L-lysyl-[protein] + ATP = N(6)-biotinyl-L-lysyl-[protein] + AMP + diphosphate + H(+). Its function is as follows. Acts both as a biotin--[acetyl-CoA-carboxylase] ligase and a repressor. This Bacillus spizizenii (strain ATCC 23059 / NRRL B-14472 / W23) (Bacillus subtilis subsp. spizizenii) protein is Bifunctional ligase/repressor BirA.